The sequence spans 542 residues: Peptide chain release factor 3 (542 aa).

The region spanning Glu-11 to Arg-279 is the tr-type G domain. Residues Ser-20–Thr-27, Asp-88–His-92, and Asn-142–Asp-145 contribute to the GTP site.

Belongs to the TRAFAC class translation factor GTPase superfamily. Classic translation factor GTPase family. PrfC subfamily.

It localises to the cytoplasm. Functionally, increases the formation of ribosomal termination complexes and stimulates activities of RF-1 and RF-2. It binds guanine nucleotides and has strong preference for UGA stop codons. It may interact directly with the ribosome. The stimulation of RF-1 and RF-2 is significantly reduced by GTP and GDP, but not by GMP. The chain is Peptide chain release factor 3 from Nitrosococcus oceani (strain ATCC 19707 / BCRC 17464 / JCM 30415 / NCIMB 11848 / C-107).